A 64-amino-acid chain; its full sequence is Translation machinery-associated protein 7 homolog (64 aa).

The interval Met-1 to Lys-64 is disordered. Residues Glu-21–Gly-50 are a coiled coil. Positions Met-27–Lys-44 are enriched in basic and acidic residues.

Belongs to the TMA7 family.

In Aedes aegypti (Yellowfever mosquito), this protein is Translation machinery-associated protein 7 homolog.